A 277-amino-acid polypeptide reads, in one-letter code: Carbonyl reductase [NADPH] 1 (277 aa).

The residue at position 2 (serine 2) is an N-acetylserine. Phosphoserine is present on residues serine 2 and serine 30. NADP(+) is bound by residues 10-34, 63-64, and asparagine 90; these read VTGG…GDVV and DI. Residues 95–97 and glutamine 106 each bind glutathione; that span reads FKV. Position 140 (serine 140) interacts with substrate. Glutathione is bound at residue 193-194; that stretch reads AY. The Proton acceptor role is filled by tyrosine 194. NADP(+) contacts are provided by residues 194–198 and 231–233; these read YGVTK and VRT. Lysine 239 is modified (N6-1-carboxyethyl lysine).

It belongs to the short-chain dehydrogenases/reductases (SDR) family. As to quaternary structure, monomer.

It localises to the cytoplasm. The enzyme catalyses a secondary alcohol + NADP(+) = a ketone + NADPH + H(+). It carries out the reaction prostaglandin F2alpha + NADP(+) = prostaglandin E2 + NADPH + H(+). The catalysed reaction is prostaglandin E1 + NADP(+) = 15-oxoprostaglandin E1 + NADPH + H(+). It catalyses the reaction menadione + NADPH + H(+) = menadiol + NADP(+). The enzyme catalyses prostaglandin D2 + NADP(+) = 15-oxoprostaglandin D2 + NADPH + H(+). It carries out the reaction prostaglandin E2 + NADP(+) = 15-oxoprostaglandin E2 + NADPH + H(+). The catalysed reaction is prostaglandin F2alpha + NADP(+) = 15-oxoprostaglandin F2alpha + NADPH + H(+). It catalyses the reaction daunorubicin + NADPH + H(+) = 13-dihydrodaunorubicin + NADP(+). The enzyme catalyses S-nitrosoglutathione + NADPH + H(+) = S-(hydroxysulfenamide)glutathione + NADP(+). It carries out the reaction a primary alcohol + NADP(+) = an aldehyde + NADPH + H(+). The catalysed reaction is cortisol + NADPH + H(+) = 20beta-dihydrocortisol + NADP(+). It catalyses the reaction corticosterone + NADPH + H(+) = 20beta-dihydrocorticosterone + NADP(+). NADPH-dependent reductase with broad substrate specificity. Catalyzes the reduction of a wide variety of carbonyl compounds including quinones, prostaglandins, menadione, plus various xenobiotics. Catalyzes the reduction of the antitumor anthracyclines doxorubicin and daunorubicin to the cardiotoxic compounds doxorubicinol and daunorubicinol. Can convert prostaglandin E to prostaglandin F2-alpha. Can bind glutathione, which explains its higher affinity for glutathione-conjugated substrates. Catalyzes the reduction of S-nitrosoglutathione. In addition, participates in the glucocorticoid metabolism by catalyzing the NADPH-dependent cortisol/corticosterone into 20beta-dihydrocortisol (20b-DHF) or 20beta-corticosterone (20b-DHB), which are weak agonists of NR3C1 and NR3C2 in adipose tissue. The polypeptide is Carbonyl reductase [NADPH] 1 (Pongo abelii (Sumatran orangutan)).